A 402-amino-acid chain; its full sequence is Putative cytochrome P450 133B1 (402 aa).

Cys-348 provides a ligand contact to heme.

The protein belongs to the cytochrome P450 family. Requires heme as cofactor.

This Xylella fastidiosa (strain 9a5c) protein is Putative cytochrome P450 133B1 (cyp133B1).